Here is a 63-residue protein sequence, read N- to C-terminus: U-reduvitoxin-Pr9a (63 aa).

An N-terminal signal peptide occupies residues M1 to A19. The propeptide occupies A20–L42. The cysteines at positions 47 and 60 are disulfide-linked.

In terms of tissue distribution, expressed by the venom gland.

It localises to the secreted. This chain is U-reduvitoxin-Pr9a, found in Platymeris rhadamanthus (Red spot assassin bug).